Reading from the N-terminus, the 273-residue chain is Mitochondrial distribution and morphology protein 12 (273 aa).

The SMP-LTD domain maps to 1–273 (MSIDFDWSKL…LVWPSYITIE (273 aa)). The interval 124 to 145 (LTSPIPESRPSTPMDNHQERDR) is disordered.

The protein belongs to the MDM12 family. Component of the ER-mitochondria encounter structure (ERMES) or MDM complex, composed of mmm1, mdm10, mdm12 and mdm34. A mmm1 homodimer associates with one molecule of mdm12 on each side in a pairwise head-to-tail manner, and the SMP-LTD domains of mmm1 and mdm12 generate a continuous hydrophobic tunnel for phospholipid trafficking.

The protein resides in the mitochondrion outer membrane. It is found in the endoplasmic reticulum membrane. Its function is as follows. Component of the ERMES/MDM complex, which serves as a molecular tether to connect the endoplasmic reticulum (ER) and mitochondria. Components of this complex are involved in the control of mitochondrial shape and protein biogenesis, and function in nonvesicular lipid trafficking between the ER and mitochondria. Mdm12 is required for the interaction of the ER-resident membrane protein mmm1 and the outer mitochondrial membrane-resident beta-barrel protein mdm10. The mdm12-mmm1 subcomplex functions in the major beta-barrel assembly pathway that is responsible for biogenesis of all mitochondrial outer membrane beta-barrel proteins, and acts in a late step after the SAM complex. The mdm10-mdm12-mmm1 subcomplex further acts in the TOM40-specific pathway after the action of the mdm12-mmm1 complex. Essential for establishing and maintaining the structure of mitochondria and maintenance of mtDNA nucleoids. The chain is Mitochondrial distribution and morphology protein 12 from Schizosaccharomyces pombe (strain 972 / ATCC 24843) (Fission yeast).